The primary structure comprises 350 residues: Phosphotriesterase-related protein (350 aa).

Residues His24, His26, Glu170, His202, His231, and Asp299 each coordinate a divalent metal cation.

This sequence belongs to the metallo-dependent hydrolases superfamily. Phosphotriesterase family. A divalent metal cation is required as a cofactor.

This is Phosphotriesterase-related protein from Nematostella vectensis (Starlet sea anemone).